A 196-amino-acid polypeptide reads, in one-letter code: uncharacterized protein (196 aa).

Basic and acidic residues predominate over residues 122–135 (SEIEKKQEPIERKT). The interval 122–150 (SEIEKKQEPIERKTSTTTNTESNQEKPLR) is disordered.

This is an uncharacterized protein from Leptospira interrogans.